The chain runs to 301 residues: Protoheme IX farnesyltransferase (301 aa).

9 helical membrane passes run 34 to 54, 55 to 75, 102 to 121, 125 to 144, 152 to 172, 181 to 201, 222 to 242, 247 to 267, and 280 to 300; these read LVVF…HPLI, GLVS…FNMW, AWEC…AIAV, SALL…TMLL, IVIG…SVSG, LFAI…LLTL, SHIL…GLFV, LYEI…IAVF, and GLFK…IACV.

The protein belongs to the UbiA prenyltransferase family. Protoheme IX farnesyltransferase subfamily.

The protein resides in the cell inner membrane. It catalyses the reaction heme b + (2E,6E)-farnesyl diphosphate + H2O = Fe(II)-heme o + diphosphate. Its pathway is porphyrin-containing compound metabolism; heme O biosynthesis; heme O from protoheme: step 1/1. Converts heme B (protoheme IX) to heme O by substitution of the vinyl group on carbon 2 of heme B porphyrin ring with a hydroxyethyl farnesyl side group. This Anaplasma marginale (strain Florida) protein is Protoheme IX farnesyltransferase.